The following is a 206-amino-acid chain: Small ribosomal subunit protein uS4 (206 aa).

The S4 RNA-binding domain maps to 98–158 (RRLDNVVFRL…EKSRSMELIK (61 aa)).

Belongs to the universal ribosomal protein uS4 family. In terms of assembly, part of the 30S ribosomal subunit. Contacts protein S5. The interaction surface between S4 and S5 is involved in control of translational fidelity.

In terms of biological role, one of the primary rRNA binding proteins, it binds directly to 16S rRNA where it nucleates assembly of the body of the 30S subunit. Functionally, with S5 and S12 plays an important role in translational accuracy. This is Small ribosomal subunit protein uS4 from Thermoanaerobacter pseudethanolicus (strain ATCC 33223 / 39E) (Clostridium thermohydrosulfuricum).